We begin with the raw amino-acid sequence, 255 residues long: Putative OPA3-like protein CG13603 (255 aa).

A coiled-coil region spans residues 108-154 (KENKKNELAQSEKMELTNMLTEMNFRLERQDAQIREMTRVLADLDSR). The disordered stretch occupies residues 168-187 (VPFDPDTPDQSASARNPKKF). Residues 212 to 241 (DGRNRKAKEALQHLDEVAVQLEQSLGEAAT) adopt a coiled-coil conformation.

The protein belongs to the OPA3 family.

This is Putative OPA3-like protein CG13603 from Drosophila melanogaster (Fruit fly).